The chain runs to 486 residues: MESPQAKKSGLNLPAGMSTITSLRLETLSTPPSSASPRAISNLSSTPSPSKSSKCSDRFIPCRSSSRLHTFGLIDNQSPVKEGSNEAYNRLLKSELFGPDFASPSSSPAGCGVGSPLVSPSKNMLRFKTESCGPSSPFSPSIFGRNDGFCNEGFTPPKPPRKVPKTPHKVLDAPSLQDDFYLNLVDWSSQNTLAVGLGTCVYLWSASNSKVTKLCDLGPYDGVCSVQWTKEGSFISIGTNGGQVQIWDGTKCKKVRTMGGHQTRTGVLAWNSRILASGSRDRNILQHDMRVPSDFIGKLVGHKSEVCGLKWSCDDRELASGGNDNQLLVWNQHSQQPTLRLTEHTAAVKAIAWSPHQSNLLVSGGGTADRCIRFWNTTNGHQLNSVDTGSQVCNLAWSKNVNELVSTHGYSQNQIMVWKYPSLAKVATLTGHSMRVLYLAMSPDGQTIVTGAGDETLRFWNVFPSMKTPAPVKDTGLWSLGRTQIR.

The PEST motif signature appears at 24–36; that stretch reads RLETLSTPPSSAS. A compositionally biased stretch (polar residues) spans 27–36; it reads TLSTPPSSAS. The disordered stretch occupies residues 27–57; that stretch reads TLSTPPSSASPRAISNLSSTPSPSKSSKCSD. Low complexity predominate over residues 41-53; that stretch reads SNLSSTPSPSKSS. A C-box motif is present at residues 57-63; it reads DRFIPCR. The CSM motif motif lies at 87–98; the sequence is AYNRLLKSELFG. WD repeat units follow at residues 177–214, 218–257, 260–297, 301–340, 343–385, 387–428, and 431–470; these read QDDFYLNLVDWSSQNTLAVGLGTCVYLWSASNSKVTKL, GPYDGVCSVQWTKEGSFISIGTNGGQVQIWDGTKCKKVRT, GHQTRTGVLAWNSRILASGSRDRNILQHDMRVPSDFIG, GHKSEVCGLKWSCDDRELASGGNDNQLLVWNQHSQQPTLR, EHTA…QLNS, DTGS…KVAT, and GHSMRVLYLAMSPDGQTIVTGAGDETLRFWNVFPSMKTPA.

Belongs to the WD repeat CDC20/Fizzy family. Mostly expressed in shoot apices and, to a lower extent, in roots, especially in root tips, and in hypocotyls. Expressed in nodulation-competent root zone but not in the nodules.

It functions in the pathway protein modification; protein ubiquitination. Its function is as follows. Component of the anaphase promoting complex/cyclosome (APC/C), a cell cycle-regulated E3 ubiquitin-protein ligase complex that controls progression through mitosis and the G1 phase of the cell cycle. The protein is B-type cell cycle switch protein ccs52B of Medicago truncatula (Barrel medic).